We begin with the raw amino-acid sequence, 1130 residues long: MRTRVLRCRPFSTRILLLLLFVLAFGVYCYFYNASPQNYNKPRISYPASMEHFKSSLTHTVKSRDEPTPDQCPALKESEADIDTVAIYPTFDFQPSWLRTKEFWDKSFEDRYERIHNDTTRPRLKVIVVPHSHNDPGWLKTFEQYFEWKTKNIINNIVNKLHQYPNMTFIWTEISFLNAWWERSHPVKQKALKKLIKEGRLEITTGGWVMPDEACTHIYALIDQFIEGHHWVKTNLGVIPKTGWSIDPFGHGATVPYLLDQSGLEGTIIQRIHYAWKQWLAERQIEEFYWLASWATTKPSMIVHNQPFDIYSIKSTCGPHPSICLSFDFRKIPGEYSEYTAKHEDITEHNLHSKAKTLIEEYDRIGSLTPHNVVLVPLGDDFRYEYSVEFDAQYVNYMKMFNYINAHKEIFNADVQFGTPLDYFNAMKERHQNIPSLKGDFFVYSDIFSEGKPAYWSGYYTTRPYQKILARQFEHQLRSAEILFTLVSNYIRQMGRQGEFGASEKKLEKSYEQLIYARRNLGLFQHHDAITGTSKSSVMQDYGTKLFTSLYHCIRLQEAALTTIMLPDQSLHSQSIIQSEVEWETYGKPPKKLQVSFIDKKKVILFNPLAETRTEVVTVRSNTSNIRVYDTHKRKHVLYQIMPSITIQDNGKSIVSDTTFDIMFVATIPPLTSISYKLQEHTNTSHHCVIFCNNCEQYQKSNVFQIKKMMPGDIQLENAVLKLLVNRNTGFLRQVYRKDIRKRTVVDVQFGAYQSAQRHSGAYLFMPHYDSPEKNVLHPYTNQNNMQDDNIIIVSGPISTEITTMYLPFLVHTIRIYNVPDPVLSRAILLETDVDFEAPPKNRETELFMRLQTDIQNGDIPEFYTDQNGFQYQKRVKVNKLGIEANYYPITTMACLQDEETRLTLLTNHAQGAAAYEPGRLEVMLDRRTLYDDFRGIGEGVVDNKPTTFQNWILIESMPGVTRAKRDTSEPGFKFVNERRFGPGQKESPYQVPSQTADYLSRMFNYPVNVYLVDTSEVGEIEVKPYQSFLQSFPPGIHLVTLRTITDDVLELFPSNESYMVLHRPGYSCAVGEKPVAKSPKFSSKTRFNGLNIQNITAVSLTGLKSLRPLTGLSDIHLNAMEVKTYKIRF.

Topologically, residues 1–14 (MRTRVLRCRPFSTR) are cytoplasmic. Residues 15–35 (ILLLLLFVLAFGVYCYFYNAS) traverse the membrane as a helical; Signal-anchor for type II membrane protein segment. Over 36–1130 (PQNYNKPRIS…MEVKTYKIRF (1095 aa)) the chain is Lumenal. Residue asparagine 117 is glycosylated (N-linked (GlcNAc...) asparagine). Histidine 133 and aspartate 135 together coordinate Zn(2+). A glycan (N-linked (GlcNAc...) asparagine) is linked at asparagine 166. The Zn(2+) site is built by aspartate 247 and histidine 527. Aspartate 247 (nucleophile) is an active-site residue. N-linked (GlcNAc...) asparagine glycans are attached at residues asparagine 622, asparagine 683, asparagine 1056, and asparagine 1095.

The protein belongs to the glycosyl hydrolase 38 family. Homodimer; disulfide-linked. Zn(2+) is required as a cofactor. Post-translationally, N-glycosylated.

The protein localises to the microsome membrane. It is found in the golgi apparatus membrane. It carries out the reaction N(4)-{beta-D-GlcNAc-(1-&gt;2)-alpha-D-Man-(1-&gt;3)-[alpha-D-Man-(1-&gt;3)-[alpha-D-Man-(1-&gt;6)]-alpha-D-Man-(1-&gt;6)]-beta-D-Man-(1-&gt;4)-beta-D-GlcNAc-(1-&gt;4)-beta-D-GlcNAc}-L-asparaginyl-[protein] + 2 H2O = 2 alpha-D-mannopyranose + an N(4)-{beta-D-GlcNAc-(1-&gt;2)-alpha-D-Man-(1-&gt;3)-[alpha-D-Man-(1-&gt;6)]-beta-D-Man-(1-&gt;4)-beta-D-GlcNAc-(1-&gt;4)-beta-D-GlcNAc}-L-asparaginyl-[protein]. The protein operates within protein modification; protein glycosylation. With respect to regulation, inhibited by swainsonine. Catalyzes the first committed step in the biosynthesis of complex N-glycans. It controls conversion of high mannose to complex N-glycans; the final hydrolytic step in the N-glycan maturation pathway. The polypeptide is Alpha-mannosidase 2 (Spodoptera frugiperda (Fall armyworm)).